The following is a 627-amino-acid chain: MPCVQAQYSPSPPGSTYATQTYGSEYTTEIMNPDYTKLTMDLGSTGIMATATTSLPSFSTFMEGYPSSCELKPSCLYQMPPSGPRPLIKMEEGREHGYHHHHHHHHHHHHHQQQQPSIPPPSGPEDEVLPSTSMYFKQSPPSTPTTPGFPPQAGALWDDELPSAPGCIAPGPLLDPQMKAVPPMAAAARFPIFFKPSPPHPPAPSPAGGHHLGYDPTAAAALSLPLGAAAAAGSQAAALEGHPYGLPLAKRTATLTFPPLGLTASPTASSLLGESPSLPSPPNRSSSSGEGTCAVCGDNAACQHYGVRTCEGCKGFFKRTVQKNAKYVCLANKNCPVDKRRRNRCQYCRFQKCLSVGMVKEVVRTDSLKGRRGRLPSKPKSPLQQEPSQPSPPSPPICMMNALVRALTDATPRDLDYSRYCPTDQATAGTDAEHVQQFYNLLTASIDVSRSWAEKIPGFTDLPKEDQTLLIESAFLELFVLRLSIRSNTAEDKFVFCNGLVLHRLQCLRGFGEWLDSIKDFSLNLQSLNLDIQALACLSALSMITERHGLKEPKRVEELCTKITSSLKDHQRKGQALEPSEPKVLRALVELRKICTQGLQRIFYLKLEDLVPPPSVIDKLFLDTLPF.

Residues 1-112 (MPCVQAQYSP…HHHHHHHHHQ (112 aa)) form an activation function (AF)-1 domain region. The required for DNA-PK heterotrimer stretch occupies residues 1–139 (MPCVQAQYSP…PSTSMYFKQS (139 aa)). The segment at 1–292 (MPCVQAQYSP…NRSSSSGEGT (292 aa)) is interaction with NCOA1, NCOA2, NCOA3 and KAT2B. Disordered regions lie at residues 96–162 (HGYH…DELP) and 268–289 (ASSL…SSSG). Residues 97 to 112 (GYHHHHHHHHHHHHHQ) are compositionally biased toward basic residues. The segment covering 141-150 (PSTPTTPGFP) has biased composition (pro residues). The span at 269-288 (SSLLGESPSLPSPPNRSSSS) shows a compositional bias: low complexity. The nuclear receptor DNA-binding region spans 290–365 (EGTCAVCGDN…VGMVKEVVRT (76 aa)). NR C4-type zinc fingers lie at residues 293 to 313 (CAVC…CEGC) and 329 to 353 (CLAN…FQKC). The interval 365 to 395 (TDSLKGRRGRLPSKPKSPLQQEPSQPSPPSP) is disordered. Positions 378 to 388 (KPKSPLQQEPS) are enriched in low complexity. The tract at residues 380–627 (KSPLQQEPSQ…DKLFLDTLPF (248 aa)) is interaction with KAT2B. Residues 395–624 (PPICMMNALV…SVIDKLFLDT (230 aa)) enclose the NR LBD domain.

Belongs to the nuclear hormone receptor family. NR4 subfamily. Interacts with SIX3 (via homeobox); differentially regulates the transcriptional activities of NR4A3. Interacts with NCOA2; potentiates the activity of the NR4A3. Interacts with NCOA1, NCOA3, MED1 and KAT2B. Interacts with EP300 and NCOA2; mediates the recruitment of MED1 in the coactivator complex. Interacts with the constituents of DNA-PK heterotrimer PRKDC, XRCC6 and XRCC5; phosphorylates and prevents NR4A3 ubiquitinylation and degradation. Interacts with NR3C1 (via nuclear receptor DNA-binding domain); the interactions represses transcription activity of NR4A3 on the POMC promoter Nur response element (NurRE). Interacts with TRIM28; the interactions potentiates NR4A3 activity on NurRE promoter. Binds DNA as a monomer and homodimer. Interacts with PARP1; activates PARP1 by improving acetylation of PARP1 and suppressing the interaction between PARP1 and SIRT1. Post-translationally, phosphorylated by PRKDC. Ubiquitous. Highest levels of expression in brain. Widely expressed throughout the arcuate nucleus region of the hypothalamus, namely in AgRP neurons.

The protein resides in the nucleus. Transcriptional activator that binds to regulatory elements in promoter regions in a cell- and response element (target)-specific manner. Induces gene expression by binding as monomers to the NR4A1 response element (NBRE) 5'-AAAAGGTCA-3' site and as homodimers to the Nur response element (NurRE) site in the promoter of their regulated target genes. Plays a role in the regulation of proliferation, survival and differentiation of many different cell types and also in metabolism and inflammation. Mediates proliferation of vascular smooth muscle, myeloid progenitor cell and type B pancreatic cells; promotes mitogen-induced vascular smooth muscle cell proliferation through transactivation of SKP2 promoter by binding a NBRE site. Upon PDGF stimulation, stimulates vascular smooth muscle cell proliferation by regulating CCND1 and CCND2 expression. In islets, induces type B pancreatic cell proliferation through up-regulation of genes that activate cell cycle, as well as genes that cause degradation of the CDKN1A. Negatively regulates myeloid progenitor cell proliferation by repressing RUNX1 in a NBRE site-independent manner. During inner ear, plays a role as a key mediator of the proliferative growth phase of semicircular canal development. Also mediates survival of neuron and smooth muscle cells; mediates CREB-induced neuronal survival, and during hippocampus development, plays a critical role in pyramidal cell survival and axonal guidance. Is required for S phase entry of the cell cycle and survival of smooth muscle cells by inducing CCND1, resulting in RB1 phosphorylation. Binds to NBRE motif in CCND1 promoter, resulting in the activation of the promoter and CCND1 transcription. Also plays a role in inflammation; upon TNF stimulation, mediates monocyte adhesion by inducing the expression of VCAM1 and ICAM1 by binding to the NBRE consensus site. In mast cells activated by Fc-epsilon receptor cross-linking, promotes the synthesis and release of cytokines but impairs events leading to degranulation. Also plays a role in metabolism; by modulating feeding behavior; and by playing a role in energy balance by inhibiting the glucocorticoid-induced orexigenic neuropeptides AGRP expression, at least in part by forming a complex with activated NR3C1 on the AGRP- glucocorticoid response element (GRE), and thus weakening the DNA binding activity of NR3C1. Upon catecholamines stimulation, regulates gene expression that controls oxidative metabolism in skeletal muscle. Plays a role in glucose transport by regulating translocation of the SLC2A4 glucose transporter to the cell surface. Finally, during gastrulation plays a crucial role in the formation of anterior mesoderm by controlling cell migration. Inhibits adipogenesis. Also participates in cardiac hypertrophy by activating PARP1. The chain is Nuclear receptor subfamily 4 group A member 3 (Nr4a3) from Mus musculus (Mouse).